Reading from the N-terminus, the 696-residue chain is Glycine--tRNA ligase beta subunit (696 aa).

The protein belongs to the class-II aminoacyl-tRNA synthetase family. In terms of assembly, tetramer of two alpha and two beta subunits.

It is found in the cytoplasm. It carries out the reaction tRNA(Gly) + glycine + ATP = glycyl-tRNA(Gly) + AMP + diphosphate. The protein is Glycine--tRNA ligase beta subunit of Nitratidesulfovibrio vulgaris (strain ATCC 29579 / DSM 644 / CCUG 34227 / NCIMB 8303 / VKM B-1760 / Hildenborough) (Desulfovibrio vulgaris).